A 311-amino-acid chain; its full sequence is Malate dehydrogenase (311 aa).

10–15 (GAGHTG) contributes to the NAD(+) binding site. 2 residues coordinate substrate: Arg-85 and Arg-91. Residues Asn-98 and 121 to 123 (LTN) each bind NAD(+). The substrate site is built by Asn-123 and Arg-154. His-178 acts as the Proton acceptor in catalysis.

Belongs to the LDH/MDH superfamily. MDH type 3 family.

The catalysed reaction is (S)-malate + NAD(+) = oxaloacetate + NADH + H(+). Its function is as follows. Catalyzes the reversible oxidation of malate to oxaloacetate. The polypeptide is Malate dehydrogenase (Staphylococcus carnosus (strain TM300)).